The chain runs to 132 residues: Small ribosomal subunit protein uS8 (132 aa).

It belongs to the universal ribosomal protein uS8 family. As to quaternary structure, part of the 30S ribosomal subunit. Contacts proteins S5 and S12.

Its function is as follows. One of the primary rRNA binding proteins, it binds directly to 16S rRNA central domain where it helps coordinate assembly of the platform of the 30S subunit. The sequence is that of Small ribosomal subunit protein uS8 from Xanthomonas oryzae pv. oryzae (strain MAFF 311018).